Consider the following 223-residue polypeptide: MOB-like protein phocein (223 aa).

Zn(2+) is bound by residues Cys92, Cys97, Cys110, His113, Cys119, His127, His169, and His174.

This sequence belongs to the MOB1/phocein family. As to quaternary structure, part of the core of STRIPAK complexes composed of PP2A catalytic and scaffolding subunits, the striatins (PP2A regulatory subunits), the striatin-associated proteins MOB4, STRIP1 and STRIP2, PDCD10 and members of the STE20 kinases, such as STK24 and STK26.

Its subcellular location is the cytoplasm. The protein resides in the membrane. It localises to the golgi apparatus. The protein localises to the golgi stack membrane. Functionally, part of the striatin-interacting phosphatase and kinase (STRIPAK) complexes. STRIPAK complexes have critical roles in protein (de)phosphorylation and are regulators of multiple signaling pathways including Hippo, MAPK, nuclear receptor and cytoskeleton remodeling. Different types of STRIPAK complexes are involved in a variety of biological processes such as cell growth, differentiation, apoptosis, metabolism and immune regulation. This chain is MOB-like protein phocein (MOB4), found in Gallus gallus (Chicken).